The sequence spans 610 residues: UvrABC system protein C (610 aa).

In terms of domain architecture, GIY-YIG spans 13 to 91 (HLPGVYRMYD…IKENQPKYNV (79 aa)). A UVR domain is found at 201–236 (GQVVEHLVQKMENAAQELDFEAAARFRDQIQSVRAV).

It belongs to the UvrC family. As to quaternary structure, interacts with UvrB in an incision complex.

Its subcellular location is the cytoplasm. In terms of biological role, the UvrABC repair system catalyzes the recognition and processing of DNA lesions. UvrC both incises the 5' and 3' sides of the lesion. The N-terminal half is responsible for the 3' incision and the C-terminal half is responsible for the 5' incision. In Actinobacillus pleuropneumoniae serotype 7 (strain AP76), this protein is UvrABC system protein C.